Reading from the N-terminus, the 382-residue chain is Glutamine synthetase cytosolic isozyme (382 aa).

The 83-residue stretch at 36–118 (GKICAEYVWI…VMCDCYEPPK (83 aa)) folds into the GS beta-grasp domain. The region spanning 135-382 (TRFACAEVME…RLIVETTILL (248 aa)) is the GS catalytic domain.

The protein belongs to the glutamine synthetase family. As to quaternary structure, homooctamer.

The protein resides in the cytoplasm. The catalysed reaction is L-glutamate + NH4(+) + ATP = L-glutamine + ADP + phosphate + H(+). The protein is Glutamine synthetase cytosolic isozyme (GLN1) of Chlamydomonas reinhardtii (Chlamydomonas smithii).